Reading from the N-terminus, the 66-residue chain is uncharacterized protein (66 aa).

Positions 1-25 are cleaved as a signal peptide; it reads MIVIILLFISIIVFLSVIQPQPSKN. The segment covering 21 to 31 has biased composition (polar residues); that stretch reads QPSKNKSRQQA. The interval 21 to 66 is disordered; it reads QPSKNKSRQQADSGYFGYSDHSSHHDGCSSDGGFSDSGCGGGGGGD.

This is an uncharacterized protein from Bacillus subtilis (strain 168).